The sequence spans 155 residues: Pathogenesis-related protein B (155 aa).

This sequence belongs to the BetVI family.

This Petroselinum crispum (Parsley) protein is Pathogenesis-related protein B (PCPR1-3).